We begin with the raw amino-acid sequence, 226 residues long: Large ribosomal subunit protein uL1 (226 aa).

The protein belongs to the universal ribosomal protein uL1 family. As to quaternary structure, part of the 50S ribosomal subunit.

In terms of biological role, binds directly to 23S rRNA. The L1 stalk is quite mobile in the ribosome, and is involved in E site tRNA release. Protein L1 is also a translational repressor protein, it controls the translation of the L11 operon by binding to its mRNA. This is Large ribosomal subunit protein uL1 from Mycoplasma mycoides subsp. mycoides SC (strain CCUG 32753 / NCTC 10114 / PG1).